The chain runs to 137 residues: Small ribosomal subunit protein bS16m (137 aa).

Residues 1–34 (MVHLTTLLCKAYRGGHLTIRLALGGCTNRPFYRI) constitute a mitochondrion transit peptide. Position 130 is a phosphothreonine (Thr130).

This sequence belongs to the bacterial ribosomal protein bS16 family. In terms of assembly, component of the mitochondrial small ribosomal subunit (mt-SSU). Mature mammalian 55S mitochondrial ribosomes consist of a small (28S) and a large (39S) subunit. The 28S small subunit contains a 12S ribosomal RNA (12S mt-rRNA) and 30 different proteins. The 39S large subunit contains a 16S rRNA (16S mt-rRNA), a copy of mitochondrial valine transfer RNA (mt-tRNA(Val)), which plays an integral structural role, and 52 different proteins. bS16m has a zinc binding site.

The protein resides in the mitochondrion. This is Small ribosomal subunit protein bS16m (MRPS16) from Homo sapiens (Human).